A 247-amino-acid chain; its full sequence is E3 SUMO-protein ligase NSE2 (247 aa).

Met-1 carries the N-acetylmethionine modification. Residues Lys-90 and Lys-107 each participate in a glycyl lysine isopeptide (Lys-Gly) (interchain with G-Cter in SUMO2) cross-link. A Phosphoserine modification is found at Ser-116. Glycyl lysine isopeptide (Lys-Gly) (interchain with G-Cter in SUMO2) cross-links involve residues Lys-125 and Lys-130. An SP-RING-type zinc finger spans residues Met-154–Lys-240. Residues Cys-185, His-187, Cys-210, and Cys-215 each coordinate Zn(2+).

Belongs to the NSE2 family. Component of the SMC5-SMC6 complex which consists at least of SMC5, SMC6, NSMCE2, NSMCE1, NSMCE4A or EID3 and NSMCE3. In terms of processing, sumoylated, possibly via autosumoylation.

The protein resides in the nucleus. Its subcellular location is the chromosome. It is found in the telomere. It localises to the PML body. Its pathway is protein modification; protein sumoylation. E3 SUMO-protein ligase component of the SMC5-SMC6 complex, a complex involved in DNA double-strand break repair by homologous recombination. Is not be required for the stability of the complex. The complex may promote sister chromatid homologous recombination by recruiting the SMC1-SMC3 cohesin complex to double-strand breaks. Acts as an E3 ligase mediating SUMO attachment to various proteins such as SMC6L1 and TSNAX, the shelterin complex subunits TERF1, TERF2, TINF2 and TERF2IP, RAD51AP1, and maybe the cohesin components RAD21 and STAG2. Required for recruitment of telomeres to PML nuclear bodies. Required for sister chromatid cohesion during prometaphase and mitotic progression. This chain is E3 SUMO-protein ligase NSE2 (Nsmce2), found in Rattus norvegicus (Rat).